The following is a 216-amino-acid chain: ATP phosphoribosyltransferase (216 aa).

Belongs to the ATP phosphoribosyltransferase family. Short subfamily. In terms of assembly, heteromultimer composed of HisG and HisZ subunits.

Its subcellular location is the cytoplasm. It carries out the reaction 1-(5-phospho-beta-D-ribosyl)-ATP + diphosphate = 5-phospho-alpha-D-ribose 1-diphosphate + ATP. It participates in amino-acid biosynthesis; L-histidine biosynthesis; L-histidine from 5-phospho-alpha-D-ribose 1-diphosphate: step 1/9. Its function is as follows. Catalyzes the condensation of ATP and 5-phosphoribose 1-diphosphate to form N'-(5'-phosphoribosyl)-ATP (PR-ATP). Has a crucial role in the pathway because the rate of histidine biosynthesis seems to be controlled primarily by regulation of HisG enzymatic activity. The chain is ATP phosphoribosyltransferase from Acidovorax ebreus (strain TPSY) (Diaphorobacter sp. (strain TPSY)).